Consider the following 36-residue polypeptide: Allergen Act d 3 (36 aa).

N-glycosylated.

This Actinidia deliciosa (Kiwi) protein is Allergen Act d 3.